We begin with the raw amino-acid sequence, 188 residues long: Adenine phosphoribosyltransferase (188 aa).

Belongs to the purine/pyrimidine phosphoribosyltransferase family. In terms of assembly, homodimer.

Its subcellular location is the cytoplasm. The catalysed reaction is AMP + diphosphate = 5-phospho-alpha-D-ribose 1-diphosphate + adenine. It participates in purine metabolism; AMP biosynthesis via salvage pathway; AMP from adenine: step 1/1. Its function is as follows. Catalyzes a salvage reaction resulting in the formation of AMP, that is energically less costly than de novo synthesis. The chain is Adenine phosphoribosyltransferase from Burkholderia thailandensis (strain ATCC 700388 / DSM 13276 / CCUG 48851 / CIP 106301 / E264).